Here is a 254-residue protein sequence, read N- to C-terminus: Triosephosphate isomerase (254 aa).

10 to 12 is a substrate binding site; sequence NWK. H99 acts as the Electrophile in catalysis. E169 (proton acceptor) is an active-site residue. Residues G175, S215, and 236 to 237 each bind substrate; that span reads GG.

This sequence belongs to the triosephosphate isomerase family. Homodimer.

It localises to the cytoplasm. The enzyme catalyses D-glyceraldehyde 3-phosphate = dihydroxyacetone phosphate. Its pathway is carbohydrate biosynthesis; gluconeogenesis. It functions in the pathway carbohydrate degradation; glycolysis; D-glyceraldehyde 3-phosphate from glycerone phosphate: step 1/1. Functionally, involved in the gluconeogenesis. Catalyzes stereospecifically the conversion of dihydroxyacetone phosphate (DHAP) to D-glyceraldehyde-3-phosphate (G3P). In Chlamydia felis (strain Fe/C-56) (Chlamydophila felis), this protein is Triosephosphate isomerase.